Here is a 30-residue protein sequence, read N- to C-terminus: Cycloviolin-C (30 aa).

A cross-link (cyclopeptide (Gly-Asn)) is located at residues 1 to 30; it reads GIPCGESCVFIPCLTTVAGCSCKNKVCYRN. 3 cysteine pairs are disulfide-bonded: Cys-4/Cys-20, Cys-8/Cys-22, and Cys-13/Cys-27.

In terms of processing, this is a cyclic peptide.

In terms of biological role, probably participates in a plant defense mechanism. Has anti-HIV activity. The protein is Cycloviolin-C of Leonia cymosa (Sacha uba).